The following is a 1045-amino-acid chain: Pre-mRNA-splicing factor ATP-dependent RNA helicase DHX16 (1045 aa).

The segment at 101–211 (EDSEESSEEA…ERSDKKAYEE (111 aa)) is disordered. 3 positions are modified to phosphoserine: Ser103, Ser106, and Ser107. Residues 119–131 (QKKRKKRKHLRKK) are compositionally biased toward basic residues. The segment covering 135-144 (EEEEEEEEEV) has biased composition (acidic residues). A Phosphoserine modification is found at Ser164. Residues 170-211 (RTERERLQDLEERDAFAERVRQRDKDRTRNVLERSDKKAYEE) are compositionally biased toward basic and acidic residues. Positions 413-577 (LAAVANHQIL…FDDAPVFRIP (165 aa)) constitute a Helicase ATP-binding domain. An ATP-binding site is contributed by 426-433 (GETGSGKT). The DEAH box motif lies at 524-527 (DEAH). One can recognise a Helicase C-terminal domain in the interval 602 to 775 (SVLQIHVTQP…NVVLLLKSLG (174 aa)). Residue Thr716 is modified to Phosphothreonine. Positions 1026 to 1045 (EDPHAKKMPKKTGKTREELG) are disordered.

It belongs to the DEAD box helicase family. DEAH subfamily. DDX16/PRP8 sub-subfamily. In terms of assembly, component of pre-catalytic spliceosome complexes. Component of the minor spliceosome, which splices U12-type introns. Interacts with GPKOW. Interacts with TRIM6. Interacts with RIGI.

The protein localises to the nucleus. The protein resides in the nucleoplasm. It is found in the cytoplasm. The catalysed reaction is ATP + H2O = ADP + phosphate + H(+). In terms of biological role, required for pre-mRNA splicing as a component of the spliceosome. Contributes to pre-mRNA splicing after spliceosome formation and prior to the first transesterification reaction. As a component of the minor spliceosome, involved in the splicing of U12-type introns in pre-mRNAs. Also plays a role in innate antiviral response by acting as a pattern recognition receptor sensing splicing signals in viral RNA. Mechanistically, TRIM6 promotes the interaction between unanchored 'Lys-48'-polyubiquitin chains and DHX16, leading to DHX16 interaction with RIGI and ssRNA to amplify RIGI-dependent innate antiviral immune responses. This chain is Pre-mRNA-splicing factor ATP-dependent RNA helicase DHX16 (DHX16), found in Sus scrofa (Pig).